The sequence spans 423 residues: ATP-dependent Clp protease ATP-binding subunit ClpX (423 aa).

The region spanning 1-50 is the ClpX-type ZB domain; sequence MTDDTEYRCSFCGKEHHQVDDLIAGPDVRICSECVVLSCEIVEDRRNEAL. Residues Cys9, Cys12, Cys31, and Cys34 each coordinate Zn(2+). 126 to 133 is an ATP binding site; the sequence is PTGCGKTY.

This sequence belongs to the ClpX chaperone family. As to quaternary structure, component of the ClpX-ClpP complex. Forms a hexameric ring that, in the presence of ATP, binds to fourteen ClpP subunits assembled into a disk-like structure with a central cavity, resembling the structure of eukaryotic proteasomes.

Functionally, ATP-dependent specificity component of the Clp protease. It directs the protease to specific substrates. Can perform chaperone functions in the absence of ClpP. This Tropheryma whipplei (strain Twist) (Whipple's bacillus) protein is ATP-dependent Clp protease ATP-binding subunit ClpX.